A 537-amino-acid polypeptide reads, in one-letter code: Synaptotagmin-2 (537 aa).

Over 1–2 (MG) the chain is Cytoplasmic. A helical transmembrane segment spans residues 3–23 (IISTILGVIGFGFGTTIGIVI). Over 24–537 (GYYLFIYFQS…QIELQWRNSS (514 aa)) the chain is Lumenal. An SMP-LTD domain is found at 67–249 (DFDRIDWLNK…WPKTLNVQIM (183 aa)). The segment at 227 to 505 (QEIIKDQVAN…TLGYVVINLG (279 aa)) is phospholipid binding. C2 domains lie at 240-362 (WPKT…LMTL) and 402-517 (DPNA…NDKY). Ca(2+)-binding residues include D276, D282, D332, and E334.

This sequence belongs to the synaptotagmin family. Requires Ca(2+) as cofactor.

It localises to the golgi apparatus membrane. May play an important role in regulating an unconventional protein trafficking from the cytosol to the extracellular matrix. This chain is Synaptotagmin-2 (SYT2), found in Arabidopsis thaliana (Mouse-ear cress).